Reading from the N-terminus, the 340-residue chain is N-acetyl-gamma-glutamyl-phosphate reductase (340 aa).

Cysteine 146 is an active-site residue.

Belongs to the NAGSA dehydrogenase family. Type 1 subfamily.

The protein resides in the cytoplasm. It catalyses the reaction N-acetyl-L-glutamate 5-semialdehyde + phosphate + NADP(+) = N-acetyl-L-glutamyl 5-phosphate + NADPH + H(+). Its pathway is amino-acid biosynthesis; L-arginine biosynthesis; N(2)-acetyl-L-ornithine from L-glutamate: step 3/4. In terms of biological role, catalyzes the NADPH-dependent reduction of N-acetyl-5-glutamyl phosphate to yield N-acetyl-L-glutamate 5-semialdehyde. The sequence is that of N-acetyl-gamma-glutamyl-phosphate reductase from Streptococcus sanguinis (strain SK36).